The sequence spans 355 residues: Daphnetin O-methyltransferase 1 (355 aa).

Residues aspartate 222, aspartate 242, and lysine 256 each contribute to the S-adenosyl-L-homocysteine site. Histidine 260 serves as the catalytic Proton acceptor.

It belongs to the class I-like SAM-binding methyltransferase superfamily. Cation-independent O-methyltransferase family. COMT subfamily.

The enzyme catalyses 7,8-dihydroxycoumarin + S-adenosyl-L-methionine = 7-hydroxy-8-methoxycoumarin + S-adenosyl-L-homocysteine + H(+). The protein operates within aromatic compound metabolism. It participates in secondary metabolite biosynthesis. O-methyltransferase involved in the biosynthesis of coumarins natural products such as daphnetin derivatives. Catalyzes specifically the methylation of daphnetin (7,8-dihydroxycoumarin) to produce hydrangetin (7-hydroxy-8-methoxycoumarin). Probably involved in acclimation to low temperature conditions. The sequence is that of Daphnetin O-methyltransferase 1 from Secale cereale (Rye).